A 561-amino-acid polypeptide reads, in one-letter code: Asparagine synthetase [glutamine-hydrolyzing] (561 aa).

Cys2 (for GATase activity) is an active-site residue. Residues 2-191 (CGIWALFGSD…PGHYEVLDLK (190 aa)) form the Glutamine amidotransferase type-2 domain. L-glutamine is bound by residues 49–53 (RLAVV), 75–77 (NGE), and Asp97. An Asparagine synthetase domain is found at 213-536 (HALYDNVEKL…PGRADWLSHY (324 aa)). ATP contacts are provided by residues Leu256, Ile288, and 363-364 (SG). An N6-acetyllysine modification is found at Lys385. Residue Thr545 is modified to Phosphothreonine. The residue at position 557 (Ser557) is a Phosphoserine.

The catalysed reaction is L-aspartate + L-glutamine + ATP + H2O = L-asparagine + L-glutamate + AMP + diphosphate + H(+). Its pathway is amino-acid biosynthesis; L-asparagine biosynthesis; L-asparagine from L-aspartate (L-Gln route): step 1/1. The chain is Asparagine synthetase [glutamine-hydrolyzing] (ASNS) from Pongo abelii (Sumatran orangutan).